The sequence spans 445 residues: 6-phosphogluconate dehydrogenase, decarboxylating (445 aa).

Residues 1–4 (AVMG), 22–24 (NRS), 63–65 (VKA), and N91 contribute to the NADP(+) site. Substrate is bound by residues N91 and 117–119 (SGG). K172 (proton acceptor) is an active-site residue. 175–176 (HN) serves as a coordination point for substrate. E179 serves as the catalytic Proton donor. Substrate is bound by residues Y180, K249, R276, R434, and H440.

Belongs to the 6-phosphogluconate dehydrogenase family. As to quaternary structure, homodimer.

It catalyses the reaction 6-phospho-D-gluconate + NADP(+) = D-ribulose 5-phosphate + CO2 + NADPH. It functions in the pathway carbohydrate degradation; pentose phosphate pathway; D-ribulose 5-phosphate from D-glucose 6-phosphate (oxidative stage): step 3/3. Functionally, catalyzes the oxidative decarboxylation of 6-phosphogluconate to ribulose 5-phosphate and CO(2), with concomitant reduction of NADP to NADPH. The polypeptide is 6-phosphogluconate dehydrogenase, decarboxylating (gnd) (Raoultella terrigena (Klebsiella terrigena)).